Here is a 155-residue protein sequence, read N- to C-terminus: Deoxyuridine 5'-triphosphate nucleotidohydrolase (155 aa).

Substrate-binding positions include Arg71–Gly73, Asn84, Thr88–Asp90, and Lys98.

The protein belongs to the dUTPase family. It depends on Mg(2+) as a cofactor.

The enzyme catalyses dUTP + H2O = dUMP + diphosphate + H(+). Its pathway is pyrimidine metabolism; dUMP biosynthesis; dUMP from dCTP (dUTP route): step 2/2. In terms of biological role, this enzyme is involved in nucleotide metabolism: it produces dUMP, the immediate precursor of thymidine nucleotides and it decreases the intracellular concentration of dUTP so that uracil cannot be incorporated into DNA. The sequence is that of Deoxyuridine 5'-triphosphate nucleotidohydrolase from Corynebacterium jeikeium (strain K411).